A 114-amino-acid polypeptide reads, in one-letter code: Putative cysteine proteinase inhibitor 9 (114 aa).

Residues 1–23 (MRTSSLVLFAAVAVFGAACTAAA) form the signal peptide.

Belongs to the cystatin family. Phytocystatin subfamily.

It localises to the secreted. Its function is as follows. Specific inhibitor of cysteine proteinases. Probably involved in the regulation of endogenous processes and in defense against pests and pathogens. This Oryza sativa subsp. japonica (Rice) protein is Putative cysteine proteinase inhibitor 9.